The sequence spans 180 residues: Shikimate kinase (180 aa).

Residue 14-19 (GAGKSC) participates in ATP binding. Serine 18 provides a ligand contact to Mg(2+). Substrate-binding residues include aspartate 36, arginine 60, and glycine 82. Arginine 120 contributes to the ATP binding site. Arginine 139 is a binding site for substrate.

The protein belongs to the shikimate kinase family. In terms of assembly, monomer. It depends on Mg(2+) as a cofactor.

Its subcellular location is the cytoplasm. The catalysed reaction is shikimate + ATP = 3-phosphoshikimate + ADP + H(+). It participates in metabolic intermediate biosynthesis; chorismate biosynthesis; chorismate from D-erythrose 4-phosphate and phosphoenolpyruvate: step 5/7. Functionally, catalyzes the specific phosphorylation of the 3-hydroxyl group of shikimic acid using ATP as a cosubstrate. This is Shikimate kinase from Xanthomonas axonopodis pv. citri (strain 306).